The sequence spans 197 residues: Adrenodoxin-like protein 1, mitochondrial (197 aa).

The N-terminal 35 residues, 1–35 (MIGHRISRLGSTIVKQLAREGYLATYGTKNLHRSY), are a transit peptide targeting the mitochondrion. Residues 79–184 (EKITIIFVDK…GVRLAIPSAT (106 aa)) form the 2Fe-2S ferredoxin-type domain. C118, C124, C127, and C165 together coordinate [2Fe-2S] cluster.

It belongs to the adrenodoxin/putidaredoxin family. It depends on [2Fe-2S] cluster as a cofactor.

It localises to the mitochondrion matrix. Functionally, associates in vitro with the adrenodoxin reductase MFDR to form an efficient low potential electron transfer chain that is able to reduce cytochrome C. Functions as accessory mitochondrial protein involved with BIO2 in the plant biotin synthase reaction. The polypeptide is Adrenodoxin-like protein 1, mitochondrial (Arabidopsis thaliana (Mouse-ear cress)).